Consider the following 272-residue polypeptide: Formamidopyrimidine-DNA glycosylase (272 aa).

The active-site Schiff-base intermediate with DNA is the P2. E3 serves as the catalytic Proton donor. The active-site Proton donor; for beta-elimination activity is the K58. DNA is bound by residues H92, R111, and R153. The FPG-type zinc-finger motif lies at 238–272 (NVYGRGGEPCPVCAKPLTEKPLSQRTTVYCTHCQN). The Proton donor; for delta-elimination activity role is filled by R262.

It belongs to the FPG family. In terms of assembly, monomer. The cofactor is Zn(2+).

It carries out the reaction Hydrolysis of DNA containing ring-opened 7-methylguanine residues, releasing 2,6-diamino-4-hydroxy-5-(N-methyl)formamidopyrimidine.. The catalysed reaction is 2'-deoxyribonucleotide-(2'-deoxyribose 5'-phosphate)-2'-deoxyribonucleotide-DNA = a 3'-end 2'-deoxyribonucleotide-(2,3-dehydro-2,3-deoxyribose 5'-phosphate)-DNA + a 5'-end 5'-phospho-2'-deoxyribonucleoside-DNA + H(+). Functionally, involved in base excision repair of DNA damaged by oxidation or by mutagenic agents. Acts as a DNA glycosylase that recognizes and removes damaged bases. Has a preference for oxidized purines, such as 7,8-dihydro-8-oxoguanine (8-oxoG). Has AP (apurinic/apyrimidinic) lyase activity and introduces nicks in the DNA strand. Cleaves the DNA backbone by beta-delta elimination to generate a single-strand break at the site of the removed base with both 3'- and 5'-phosphates. This Teredinibacter turnerae (strain ATCC 39867 / T7901) protein is Formamidopyrimidine-DNA glycosylase.